Here is a 235-residue protein sequence, read N- to C-terminus: MLNSGSLIWLRIDYMALTMMGKKRGMIQLFDEKGNAIVCTVIQAEPNVITQIKTKETDGYTALQLGFEKVTGKTQHTIEARTGKPRLGHFKKAGVESRRFLVESRLDSTEEYTLGQEISVDTFNGIEFVDATAISKGKGYQGVMKRHNFAGGPASHGSGHHRHAGSTGMRSTPGRGLPGGKKAGQMGNERVTVQNLRIVKVDSENHVIVVKGQVPGPRNGLVYITQAKKLAKKKS.

The segment at 150–189 (AGGPASHGSGHHRHAGSTGMRSTPGRGLPGGKKAGQMGNE) is disordered.

Belongs to the universal ribosomal protein uL3 family. Part of the 50S ribosomal subunit. Forms a cluster with proteins L14 and L19.

In terms of biological role, one of the primary rRNA binding proteins, it binds directly near the 3'-end of the 23S rRNA, where it nucleates assembly of the 50S subunit. This chain is Large ribosomal subunit protein uL3, found in Protochlamydia amoebophila (strain UWE25).